The primary structure comprises 154 residues: MATFSQKPAEVEKKWVIIDAEGLVVGRLASIIAMRLRGKHKATFTPHVDDGDNVIVINADKVVFTGKKYSDKVYYWHTGYAGGIKERTARQIIEGRFPERVLEKAVERMVPRGPLGRRQMKNLRVYAGSNHPHEAQQPVALDVAALNKKNVRSA.

The protein belongs to the universal ribosomal protein uL13 family. As to quaternary structure, part of the 50S ribosomal subunit.

Its function is as follows. This protein is one of the early assembly proteins of the 50S ribosomal subunit, although it is not seen to bind rRNA by itself. It is important during the early stages of 50S assembly. The sequence is that of Large ribosomal subunit protein uL13 from Rhizobium etli (strain CIAT 652).